A 396-amino-acid polypeptide reads, in one-letter code: 1-deoxy-D-xylulose 5-phosphate reductoisomerase (396 aa).

NADPH-binding residues include Thr15, Gly16, Ser17, Ile18, Gly41, and Asn129. Lys130 is a binding site for 1-deoxy-D-xylulose 5-phosphate. Residue Glu131 coordinates NADPH. Residue Asp155 coordinates Mn(2+). 1-deoxy-D-xylulose 5-phosphate contacts are provided by Ser156, Glu157, Ser182, and His205. Glu157 is a Mn(2+) binding site. Gly211 serves as a coordination point for NADPH. 1-deoxy-D-xylulose 5-phosphate contacts are provided by Ser218, Asn223, Lys224, and Glu227. Glu227 contacts Mn(2+).

It belongs to the DXR family. Requires Mg(2+) as cofactor. Mn(2+) is required as a cofactor.

It carries out the reaction 2-C-methyl-D-erythritol 4-phosphate + NADP(+) = 1-deoxy-D-xylulose 5-phosphate + NADPH + H(+). It participates in isoprenoid biosynthesis; isopentenyl diphosphate biosynthesis via DXP pathway; isopentenyl diphosphate from 1-deoxy-D-xylulose 5-phosphate: step 1/6. Catalyzes the NADPH-dependent rearrangement and reduction of 1-deoxy-D-xylulose-5-phosphate (DXP) to 2-C-methyl-D-erythritol 4-phosphate (MEP). The chain is 1-deoxy-D-xylulose 5-phosphate reductoisomerase from Xanthomonas campestris pv. campestris (strain B100).